A 544-amino-acid polypeptide reads, in one-letter code: Ceramide glucosyltransferase (544 aa).

Over 1–15 (MVQEELSLFRITTGY) the chain is Lumenal. A helical membrane pass occupies residues 16 to 36 (FFLLWYIIILVAAYSGFFEIL). Over 37 to 427 (FNFRNRPILH…LATLIEPTTE (391 aa)) the chain is Cytoplasmic. Residue aspartate 109 is a short sequence motif, D1. Position 171 (aspartate 171) is a short sequence motif, D2. Position 364 (aspartate 364) is a short sequence motif, D3. The active-site Proton acceptor is the aspartate 364. The (Q/R)XXRW signature appears at 404 to 408 (RRVRW). The chain crosses the membrane as a helical span at residues 428 to 448 (SIICGIYGTYAISTVFFGTWF). Topologically, residues 449 to 451 (NKY) are lumenal. The chain crosses the membrane as a helical span at residues 452–472 (WFVMHMLIWMLTDYVQYHTLI). Topologically, residues 473–501 (NHTLDVKNITYLPNWLNESIPPKQRNCLQ) are cytoplasmic. A helical transmembrane segment spans residues 502-522 (WGYIWILRELLALPIWIIAMI). The Lumenal segment spans residues 523–544 (GHEIDWRGRPFRIKKDLTAEEM).

The protein belongs to the glycosyltransferase 2 family.

It localises to the golgi apparatus membrane. The catalysed reaction is an N-acylsphing-4-enine + UDP-alpha-D-glucose = a beta-D-glucosyl-(1&lt;-&gt;1')-N-acylsphing-4-enine + UDP + H(+). It participates in lipid metabolism; sphingolipid metabolism. Its function is as follows. Catalyzes the final step in the biosynthesis of the membrane lipid glucosylceramide (GluCer), the transfer of glucose to ceramide. Glucosylceramides play important roles in growth, differentiation and pathogenicity. The chain is Ceramide glucosyltransferase from Candida albicans (strain SC5314 / ATCC MYA-2876) (Yeast).